Here is a 121-residue protein sequence, read N- to C-terminus: Ribosome-binding factor A (121 aa).

This sequence belongs to the RbfA family. As to quaternary structure, monomer. Binds 30S ribosomal subunits, but not 50S ribosomal subunits or 70S ribosomes.

It is found in the cytoplasm. One of several proteins that assist in the late maturation steps of the functional core of the 30S ribosomal subunit. Associates with free 30S ribosomal subunits (but not with 30S subunits that are part of 70S ribosomes or polysomes). Required for efficient processing of 16S rRNA. May interact with the 5'-terminal helix region of 16S rRNA. The chain is Ribosome-binding factor A from Lactobacillus helveticus (strain DPC 4571).